We begin with the raw amino-acid sequence, 454 residues long: Serine--tRNA ligase (454 aa).

L-serine is bound at residue 247–249; the sequence is TAE. ATP is bound by residues 278-280 and V294; that span reads RKE. Residue E301 participates in L-serine binding. 365 to 368 lines the ATP pocket; it reads ELAS. T400 contributes to the L-serine binding site.

The protein belongs to the class-II aminoacyl-tRNA synthetase family. Type-1 seryl-tRNA synthetase subfamily. Homodimer. The tRNA molecule binds across the dimer.

Its subcellular location is the cytoplasm. It catalyses the reaction tRNA(Ser) + L-serine + ATP = L-seryl-tRNA(Ser) + AMP + diphosphate + H(+). The enzyme catalyses tRNA(Sec) + L-serine + ATP = L-seryl-tRNA(Sec) + AMP + diphosphate + H(+). It participates in aminoacyl-tRNA biosynthesis; selenocysteinyl-tRNA(Sec) biosynthesis; L-seryl-tRNA(Sec) from L-serine and tRNA(Sec): step 1/1. Functionally, catalyzes the attachment of serine to tRNA(Ser). Is also able to aminoacylate tRNA(Sec) with serine, to form the misacylated tRNA L-seryl-tRNA(Sec), which will be further converted into selenocysteinyl-tRNA(Sec). The protein is Serine--tRNA ligase of Pyrobaculum calidifontis (strain DSM 21063 / JCM 11548 / VA1).